A 358-amino-acid polypeptide reads, in one-letter code: Aromatic amino acid aminotransferase (358 aa).

At lysine 214 the chain carries N6-(pyridoxal phosphate)lysine.

This sequence belongs to the class-II pyridoxal-phosphate-dependent aminotransferase family. Homodimer. The cofactor is pyridoxal 5'-phosphate.

The catalysed reaction is an aromatic L-alpha-amino acid + 2-oxoglutarate = an aromatic oxo-acid + L-glutamate. Functionally, aminotransferase that catalyzes the conversion of aromatic amino acids and 2-oxoglutarate into corresponding aromatic oxo acids and L-glutamate. In Rhodococcus opacus (strain B4), this protein is Aromatic amino acid aminotransferase.